The chain runs to 901 residues: HTH-type transcriptional regulator MalT (901 aa).

Residue 39 to 46 participates in ATP binding; that stretch reads SPAGYGKT. Positions 829 to 894 constitute an HTH luxR-type domain; that stretch reads ELIRTSPLTQ…DAVQHAQQLL (66 aa). The H-T-H motif DNA-binding region spans 853–872; that stretch reads NEQIAGELAVAATTIKTHIR.

It belongs to the MalT family. In terms of assembly, monomer in solution. Oligomerizes to an active state in the presence of the positive effectors ATP and maltotriose.

Activated by ATP and maltotriose, which are both required for DNA binding. Its function is as follows. Positively regulates the transcription of the maltose regulon whose gene products are responsible for uptake and catabolism of malto-oligosaccharides. Specifically binds to the promoter region of its target genes, recognizing a short DNA motif called the MalT box. The chain is HTH-type transcriptional regulator MalT from Salmonella typhi.